We begin with the raw amino-acid sequence, 130 residues long: MKDWLDQIKWDADGLVPAIAQDHKTGRVLMMAWMNREALSLTAAENRAIYWSRSRGKLWRKGEESGHVQKLHEMRLDCDADVIILMVEQIGDIACHTGRHSCFYRVYEDGEWKTVEPVLKDPHAIYSAGH.

Mg(2+) is bound at residue Asp-77. Residue Cys-78 participates in Zn(2+) binding. The Mg(2+) site is built by Asp-79 and Asp-81. Zn(2+) contacts are provided by Cys-95 and Cys-102.

It belongs to the PRA-CH family. In terms of assembly, homodimer. Mg(2+) serves as cofactor. It depends on Zn(2+) as a cofactor.

The protein resides in the cytoplasm. It catalyses the reaction 1-(5-phospho-beta-D-ribosyl)-5'-AMP + H2O = 1-(5-phospho-beta-D-ribosyl)-5-[(5-phospho-beta-D-ribosylamino)methylideneamino]imidazole-4-carboxamide. It functions in the pathway amino-acid biosynthesis; L-histidine biosynthesis; L-histidine from 5-phospho-alpha-D-ribose 1-diphosphate: step 3/9. In terms of biological role, catalyzes the hydrolysis of the adenine ring of phosphoribosyl-AMP. The protein is Phosphoribosyl-AMP cyclohydrolase 1 of Pseudomonas fluorescens (strain ATCC BAA-477 / NRRL B-23932 / Pf-5).